A 204-amino-acid chain; its full sequence is MTEKLKQGIDQLGLKVPETIQQSMFAFLAFLQKWNQAYNLTAITEIKSMITHHLLDSLSILPYLKGDKILDVGSGAGFPGIPLAFACPEKKFTLIDSKAKKTAFLLQAASRFKITNVTIIQERVGSYQPGFYFDTITCRALGSVREIMEQTNHLLRPGGQWLIMKGTYPEKELRGTDASAIVHVLNVPGLKAERHLVEVKNNKG.

Residues Gly-73, Phe-78, and Arg-139 each contribute to the S-adenosyl-L-methionine site.

The protein belongs to the methyltransferase superfamily. RNA methyltransferase RsmG family.

It localises to the cytoplasm. The enzyme catalyses guanosine(527) in 16S rRNA + S-adenosyl-L-methionine = N(7)-methylguanosine(527) in 16S rRNA + S-adenosyl-L-homocysteine. In terms of biological role, specifically methylates the N7 position of guanine in position 527 of 16S rRNA. The protein is Ribosomal RNA small subunit methyltransferase G of Coxiella burnetii (strain Dugway 5J108-111).